Here is a 468-residue protein sequence, read N- to C-terminus: Protein NEN1 (468 aa).

Positions 11 to 172 constitute an Exonuclease domain; that stretch reads FFDVETTVPK…DDVRMNLEVL (162 aa). Aspartate 13 and glutamate 15 together coordinate Mg(2+). Histidine 159 (proton donor/acceptor) is an active-site residue. Aspartate 164 is a binding site for Mg(2+).

It depends on Mg(2+) as a cofactor. In terms of tissue distribution, expressed in the sieve elements and phloem pole pericycle cells.

Its subcellular location is the cytoplasm. It localises to the nucleus. Its function is as follows. Probable exonuclease involved in enuclation of sieve elements. This Arabidopsis thaliana (Mouse-ear cress) protein is Protein NEN1.